The sequence spans 290 residues: 33 kDa chaperonin (290 aa).

2 disulfides stabilise this stretch: cysteine 235-cysteine 237 and cysteine 268-cysteine 271.

It belongs to the HSP33 family. In terms of processing, under oxidizing conditions two disulfide bonds are formed involving the reactive cysteines. Under reducing conditions zinc is bound to the reactive cysteines and the protein is inactive.

Its subcellular location is the cytoplasm. Its function is as follows. Redox regulated molecular chaperone. Protects both thermally unfolding and oxidatively damaged proteins from irreversible aggregation. Plays an important role in the bacterial defense system toward oxidative stress. The sequence is that of 33 kDa chaperonin from Streptococcus pyogenes serotype M49 (strain NZ131).